Consider the following 73-residue polypeptide: Large ribosomal subunit protein bL31 (73 aa).

It belongs to the bacterial ribosomal protein bL31 family. Type A subfamily. As to quaternary structure, part of the 50S ribosomal subunit.

Binds the 23S rRNA. This is Large ribosomal subunit protein bL31 from Sinorhizobium fredii (strain NBRC 101917 / NGR234).